Consider the following 122-residue polypeptide: Large ribosomal subunit protein uL14c (122 aa).

This sequence belongs to the universal ribosomal protein uL14 family. As to quaternary structure, part of the 50S ribosomal subunit.

It localises to the plastid. It is found in the chloroplast. Its function is as follows. Binds to 23S rRNA. This is Large ribosomal subunit protein uL14c from Chloranthus spicatus (Chulantree).